The sequence spans 1611 residues: SH3 domain-containing protein C23A1.17 (1611 aa).

Residues 3-67 enclose the SH3 domain; that stretch reads SFPTRVVALY…PKDFTEPAED (65 aa). Disordered stretches follow at residues 275-648, 662-741, 762-851, and 886-1365; these read THPA…PTSL, IDPP…PPGL, AVPR…NSLN, and TPST…FSAK. The span at 278–296 shows a compositional bias: polar residues; that stretch reads AASSTMATESSHQSPSADS. Over residues 300–312 the composition is skewed to basic and acidic residues; that stretch reads ELSKSQRVAKDDD. A compositionally biased stretch (polar residues) spans 316–330; that stretch reads VSNTANSDEPASSSK. Composition is skewed to acidic residues over residues 361-373 and 387-420; these read SEQEEDEYDDAES and SEPEDQDEPSEKDDENKDVEEEQEQEQEEEQIDP. The span at 421–433 shows a compositional bias: basic and acidic residues; that stretch reads EEAKRIALRERMA. Residues 472–494 show a composition bias toward low complexity; it reads STTNDSSPPKDSSSTSTQPTEQS. The segment covering 576-586 has biased composition (polar residues); it reads TQETSEQQVHK. Residues 605 to 619 are compositionally biased toward basic and acidic residues; it reads FDKETLASNEAHEAV. The span at 637-648 shows a compositional bias: low complexity; it reads SSSVVTPSPTSL. Composition is skewed to polar residues over residues 799-808, 886-902, and 923-940; these read SRPSTGSQLR, TPSTATFQGHPTISNVA, and ATHQSSTGLTQEITQLGS. Pro residues-rich tracts occupy residues 963–974, 1022–1053, and 1076–1241; these read PAAPPSIPPPLP, PPVPLPSADAPPIPVPSTAPPVPIPTSTPPVP, and IPAP…PVPA. Over residues 1242–1278 the composition is skewed to low complexity; sequence PSSEAPSVSTPRSSVPSPHSNASPSPTSSSMASAAPA. S1258, S1261, and S1266 each carry phosphoserine. A compositionally biased stretch (basic residues) spans 1300–1312; sequence KSSKSGEHHHHHN. Residues 1317–1327 show a composition bias toward polar residues; it reads DSSSTRTSLAH. Residues 1340–1350 are compositionally biased toward low complexity; sequence RSSSRASKKPS. The span at 1351 to 1362 shows a compositional bias: polar residues; sequence IVSTTGPFNESF. The residue at position 1379 (S1379) is a Phosphoserine. Position 1380 is a phosphothreonine (T1380).

It is found in the cytoplasm. The chain is SH3 domain-containing protein C23A1.17 from Schizosaccharomyces pombe (strain 972 / ATCC 24843) (Fission yeast).